The following is an 807-amino-acid chain: Glycerol-3-phosphate acyltransferase (807 aa).

The short motif at 305–310 (CHRSHM) is the HXXXXD motif element.

This sequence belongs to the GPAT/DAPAT family.

The protein resides in the cell inner membrane. It carries out the reaction sn-glycerol 3-phosphate + an acyl-CoA = a 1-acyl-sn-glycero-3-phosphate + CoA. The protein operates within phospholipid metabolism; CDP-diacylglycerol biosynthesis; CDP-diacylglycerol from sn-glycerol 3-phosphate: step 1/3. The sequence is that of Glycerol-3-phosphate acyltransferase from Vibrio atlanticus (strain LGP32) (Vibrio splendidus (strain Mel32)).